The primary structure comprises 433 residues: Bifunctional protein GlmU (433 aa).

Residues 1–226 (MLSVIILAAG…EECFLGVNSQ (226 aa)) form a pyrophosphorylase region. Residues 7–10 (LAAG), lysine 21, and 80–81 (GT) contribute to the UDP-N-acetyl-alpha-D-glucosamine site. Aspartate 106 is a Mg(2+) binding site. Residues glycine 138, glutamate 152, asparagine 167, and asparagine 224 each contribute to the UDP-N-acetyl-alpha-D-glucosamine site. Residue asparagine 224 participates in Mg(2+) binding. The linker stretch occupies residues 227–247 (TERAKAEEIMLERLRKNAMDL). An N-acetyltransferase region spans residues 248-433 (GVVMQLPSSI…NGYFKFFKKP (186 aa)). 2 residues coordinate UDP-N-acetyl-alpha-D-glucosamine: arginine 311 and lysine 328. Histidine 339 acts as the Proton acceptor in catalysis. Residues tyrosine 342 and asparagine 353 each contribute to the UDP-N-acetyl-alpha-D-glucosamine site. Acetyl-CoA is bound by residues alanine 356, 362–363 (NY), serine 381, serine 399, and arginine 416.

The protein in the N-terminal section; belongs to the N-acetylglucosamine-1-phosphate uridyltransferase family. In the C-terminal section; belongs to the transferase hexapeptide repeat family. As to quaternary structure, homotrimer. The cofactor is Mg(2+).

It is found in the cytoplasm. It catalyses the reaction alpha-D-glucosamine 1-phosphate + acetyl-CoA = N-acetyl-alpha-D-glucosamine 1-phosphate + CoA + H(+). The catalysed reaction is N-acetyl-alpha-D-glucosamine 1-phosphate + UTP + H(+) = UDP-N-acetyl-alpha-D-glucosamine + diphosphate. It functions in the pathway nucleotide-sugar biosynthesis; UDP-N-acetyl-alpha-D-glucosamine biosynthesis; N-acetyl-alpha-D-glucosamine 1-phosphate from alpha-D-glucosamine 6-phosphate (route II): step 2/2. Its pathway is nucleotide-sugar biosynthesis; UDP-N-acetyl-alpha-D-glucosamine biosynthesis; UDP-N-acetyl-alpha-D-glucosamine from N-acetyl-alpha-D-glucosamine 1-phosphate: step 1/1. It participates in bacterial outer membrane biogenesis; LPS lipid A biosynthesis. Functionally, catalyzes the last two sequential reactions in the de novo biosynthetic pathway for UDP-N-acetylglucosamine (UDP-GlcNAc). The C-terminal domain catalyzes the transfer of acetyl group from acetyl coenzyme A to glucosamine-1-phosphate (GlcN-1-P) to produce N-acetylglucosamine-1-phosphate (GlcNAc-1-P), which is converted into UDP-GlcNAc by the transfer of uridine 5-monophosphate (from uridine 5-triphosphate), a reaction catalyzed by the N-terminal domain. The protein is Bifunctional protein GlmU of Helicobacter pylori (strain HPAG1).